A 739-amino-acid chain; its full sequence is NAD(P)H-quinone oxidoreductase subunit 5, chloroplastic (739 aa).

Transmembrane regions (helical) follow at residues 9–29 (WIIP…LLLV), 39–59 (IWAF…ADLA), 89–109 (IDPL…MVLI), 125–145 (FAYM…SNLI), 147–167 (IYIF…FWFT), 185–205 (GDFG…SFEF), 224–244 (LFAA…SAQF), 258–278 (TPIS…FLVA), 280–300 (LLPL…IGII), 327–347 (LGYI…FHLI), 354–374 (ALLF…VGYS), 396–416 (TTFF…CFWS), 425–445 (WLYS…TAFY), 544–564 (LFPM…GIPF), 603–623 (IYSV…YGSV), and 719–739 (YIFL…FFSF).

The protein belongs to the complex I subunit 5 family. In terms of assembly, NDH is composed of at least 16 different subunits, 5 of which are encoded in the nucleus.

The protein localises to the plastid. It is found in the chloroplast thylakoid membrane. The catalysed reaction is a plastoquinone + NADH + (n+1) H(+)(in) = a plastoquinol + NAD(+) + n H(+)(out). The enzyme catalyses a plastoquinone + NADPH + (n+1) H(+)(in) = a plastoquinol + NADP(+) + n H(+)(out). Functionally, NDH shuttles electrons from NAD(P)H:plastoquinone, via FMN and iron-sulfur (Fe-S) centers, to quinones in the photosynthetic chain and possibly in a chloroplast respiratory chain. The immediate electron acceptor for the enzyme in this species is believed to be plastoquinone. Couples the redox reaction to proton translocation, and thus conserves the redox energy in a proton gradient. The protein is NAD(P)H-quinone oxidoreductase subunit 5, chloroplastic (ndhF) of Acorus calamus var. americanus (American sweet flag).